Consider the following 365-residue polypeptide: 3-dehydroquinate synthase (365 aa).

NAD(+)-binding positions include 69–74, 103–107, 127–128, lysine 140, lysine 149, and 167–170; these read DGEAHK, GVIGD, TT, and TLNT. Positions 182, 245, and 262 each coordinate Zn(2+).

Belongs to the sugar phosphate cyclases superfamily. Dehydroquinate synthase family. Co(2+) serves as cofactor. The cofactor is Zn(2+). NAD(+) is required as a cofactor.

It is found in the cytoplasm. The catalysed reaction is 7-phospho-2-dehydro-3-deoxy-D-arabino-heptonate = 3-dehydroquinate + phosphate. It participates in metabolic intermediate biosynthesis; chorismate biosynthesis; chorismate from D-erythrose 4-phosphate and phosphoenolpyruvate: step 2/7. Catalyzes the conversion of 3-deoxy-D-arabino-heptulosonate 7-phosphate (DAHP) to dehydroquinate (DHQ). This chain is 3-dehydroquinate synthase, found in Pseudomonas putida (strain W619).